The chain runs to 441 residues: Putative F-box protein At1g33530 (441 aa).

One can recognise an F-box domain in the interval threonine 91–histidine 137.

This chain is Putative F-box protein At1g33530, found in Arabidopsis thaliana (Mouse-ear cress).